A 120-amino-acid polypeptide reads, in one-letter code: MQLYLKDGMEIREVQFTNEEVQNYCELLNIKYDHYVPTLMCAKLWPQFELFQSFSKKPIILKETHIKTQQQLQVDCTYEATLHKVSQKLIKNIIKYTYGLEINKDKKHCMYIKQIFIEVR.

The sequence is that of Protein VraC from Staphylococcus epidermidis (strain ATCC 35984 / DSM 28319 / BCRC 17069 / CCUG 31568 / BM 3577 / RP62A).